Here is an 88-residue protein sequence, read N- to C-terminus: Large ribosomal subunit protein bL27 (88 aa).

Positions 1-21 are disordered; that stretch reads MAHKKGQGSTQNNRDSAGRRL.

This sequence belongs to the bacterial ribosomal protein bL27 family.

This Helicobacter pylori (strain P12) protein is Large ribosomal subunit protein bL27.